Reading from the N-terminus, the 471-residue chain is Monocarboxylate transporter 4 (471 aa).

The Cytoplasmic segment spans residues 1-17; sequence MGGAVVDEGPTGIKAPD. Residues 18–38 traverse the membrane as a helical segment; sequence GGWGWAVLFGCFIITGFSYAF. Topologically, residues 39 to 61 are extracellular; that stretch reads PKAVSVFFKELMHEFGIGYSDTA. Residues 62–82 form a helical membrane-spanning segment; that stretch reads WISSILLAMLYGTGPLCSMCV. Topologically, residues 83–84 are cytoplasmic; it reads NR. A helical transmembrane segment spans residues 85 to 105; it reads FGCRPVMLVGGLFASLGMVAA. Over 106 to 109 the chain is Extracellular; it reads SFCR. Residues 110–130 form a helical membrane-spanning segment; sequence SIIQIYLTTGVITGLGLALNF. Topologically, residues 131–149 are cytoplasmic; the sequence is QPSLIMLNRYFNKRRPMAN. The chain crosses the membrane as a helical span at residues 150–170; that stretch reads GLAAAGSPVFLCALSPLGQLL. The Extracellular segment spans residues 171 to 179; it reads QDHYGWRGG. Residues 180-200 traverse the membrane as a helical segment; the sequence is FLILGGLLLNCCVCAALMRPL. The Cytoplasmic segment spans residues 201-231; it reads VAPQASGGAEPHGPQRPSPRLLDLSVFRDRG. Residues 232-252 form a helical membrane-spanning segment; it reads FLIYAVAASIMVLGLFVPPVF. Over 253–267 the chain is Extracellular; that stretch reads VVSYAKDMGVPDTKA. The chain crosses the membrane as a helical span at residues 268-288; the sequence is AFLLTILGFIDIFARPTAGFI. Topologically, residues 289-298 are cytoplasmic; that stretch reads TGLKKVRPYS. Residues 299–319 form a helical membrane-spanning segment; the sequence is VYLFSFAMFFNGFTDLTGSTA. Topologically, residues 320-321 are extracellular; the sequence is SD. Residues 322–342 traverse the membrane as a helical segment; the sequence is YGGLVVFCIFFGISYGMVGAL. The Cytoplasmic segment spans residues 343–355; the sequence is QFEVLMAIVGTQK. The chain crosses the membrane as a helical span at residues 356 to 376; it reads FSSAIGLVLLLEAVAVLIGPP. Over 377-391 the chain is Extracellular; the sequence is SGGKLLDATKVYKYV. Residues 392–412 form a helical membrane-spanning segment; sequence FILAGAEVLTSSLVLLLGNFF. Residues 413–471 are Cytoplasmic-facing; the sequence is CIGKRKRPEVTKPEEVASEEEKLHKPPVDVRVDSREVEHFLKAEPEKNGEVVHTPETSV. Basolateral sorting signal stretches follow at residues 429-447 and 447-471; these read ASEEEKLHKPPVDVRVDSR and REVEHFLKAEPEKNGEVVHTPETSV. Ser430 is modified (phosphoserine). Residue Thr466 is modified to Phosphothreonine. Residue Ser470 is modified to Phosphoserine.

The protein belongs to the major facilitator superfamily. Monocarboxylate porter (TC 2.A.1.13) family. As to quaternary structure, interacts with BSG; interaction mediates SLC16A3 targeting to the plasma membrane. Detected in testis, small intestine, parotid gland, lung and brain. Small amounts are detected in heart, kidney and spleen. Expressed in skeletal muscle.

Its subcellular location is the cell membrane. The protein localises to the basolateral cell membrane. The enzyme catalyses (S)-lactate(in) + H(+)(in) = (S)-lactate(out) + H(+)(out). It catalyses the reaction pyruvate(out) + H(+)(out) = pyruvate(in) + H(+)(in). Proton-dependent transporter of monocarboxylates such as L-lactate and pyruvate. Plays a predominant role in the L-lactate efflux from highly glycolytic cells. This is Monocarboxylate transporter 4 (Slc16a3) from Rattus norvegicus (Rat).